Consider the following 74-residue polypeptide: Defensin J1-2 (74 aa).

Positions 1 to 27 (MAGFSKVIATIFLMMMLVFATGMVAEA) are cleaved as a signal peptide. 4 disulfides stabilise this stretch: Cys30–Cys74, Cys41–Cys61, Cys47–Cys68, and Cys51–Cys70.

This sequence belongs to the DEFL family. In terms of assembly, monomer. In terms of tissue distribution, expressed in flowers and in young fruits.

Its subcellular location is the secreted. Functionally, plant defense peptide with antifungal activity against F.oxysporum and B.cinerea. The chain is Defensin J1-2 from Capsicum annuum (Capsicum pepper).